The following is a 471-amino-acid chain: Casein kinase 1-like protein 9 (471 aa).

The Protein kinase domain maps to 9-278; that stretch reads FKLGRKIGSG…LKRLFRDLFI (270 aa). Residues 15–23 and lysine 38 each bind ATP; that span reads IGSGSFGEL. The active-site Proton acceptor is the aspartate 128. Residues 300-471 are disordered; it reads SSSGSSSRTR…RSLELLTLRK (172 aa). Residues 325 to 339 show a composition bias toward basic and acidic residues; sequence EKQERIAGKETRENR. Residues 385–430 show a composition bias toward low complexity; the sequence is SSRYGSSSRRAIPSSSRPSSAGGPSDSRSSSRLVTSTGGVGTVSNR. A compositionally biased stretch (polar residues) spans 431–449; that stretch reads ASTSQRIQAGNESRTSSFS. Residues 454-464 are compositionally biased toward basic and acidic residues; the sequence is NTREDPLRRSL.

This sequence belongs to the protein kinase superfamily. CK1 Ser/Thr protein kinase family. Casein kinase I subfamily. As to quaternary structure, monomer. In terms of processing, autophosphorylated on serine, threonine and tyrosine residues. As to expression, expressed in leaves, stems and flowers.

Its subcellular location is the cytoplasm. The protein localises to the nucleus. It catalyses the reaction L-seryl-[protein] + ATP = O-phospho-L-seryl-[protein] + ADP + H(+). The enzyme catalyses L-threonyl-[protein] + ATP = O-phospho-L-threonyl-[protein] + ADP + H(+). Its function is as follows. Casein kinases are operationally defined by their preferential utilization of acidic proteins such as caseins as substrates. Can phosphorylate casein on serine and threonine residues, and poly(Glu,Tyr) in vitro. The chain is Casein kinase 1-like protein 9 from Arabidopsis thaliana (Mouse-ear cress).